A 23-amino-acid chain; its full sequence is Phallacidin proprotein (23 aa).

A propeptide is located at residue Pro1. The cyclopeptide (Ala-Pro) cross-link spans 2 to 8 (AWLVDCP). Residues 3–7 (WLVDC) constitute a cross-link (2'-cysteinyl-6'-hydroxytryptophan sulfoxide (Trp-Cys)). The propeptide occupies 9–23 (CVGDDISRLLTRGEK).

This sequence belongs to the MSDIN fungal toxin family. Post-translationally, processed by the macrocyclase-peptidase enzyme POPB to yield a toxic cyclic heptapeptide. POPB first removes 10 residues from the N-terminus. Conformational trapping of the remaining peptide forces the enzyme to release this intermediate rather than proceed to macrocyclization. The enzyme rebinds the remaining peptide in a different conformation and catalyzes macrocyclization of the N-terminal 7 residues.

In terms of biological role, major toxin that belongs to the bicyclic heptapeptides called phallotoxins. Although structurally related to amatoxins, phallotoxins have a different mode of action, which is the stabilization of F-actin. Phallotoxins are poisonous when administered parenterally, but not orally because of poor absorption. In Amanita rimosa, this protein is Phallacidin proprotein.